A 628-amino-acid chain; its full sequence is (+)-alpha pinene synthase 1, chloroplastic (628 aa).

Mg(2+) is bound by residues Asp379, Asp383, and Asp531. Positions Asp379–Asp383 match the DDXXD motif motif.

Belongs to the terpene synthase family. Tpsd subfamily. It depends on Mg(2+) as a cofactor. Requires Mn(2+) as cofactor.

Its subcellular location is the plastid. The protein localises to the chloroplast. It carries out the reaction (2E)-geranyl diphosphate = (1R,5R)-alpha-pinene + diphosphate. It participates in terpene metabolism; oleoresin biosynthesis. Its pathway is secondary metabolite biosynthesis; terpenoid biosynthesis. Functionally, monoterpene synthase (TPS) involved in the biosynthesis of monoterpene natural products included in conifer oleoresin secretions and volatile emissions; these compounds contribute to biotic and abiotic stress defense against herbivores and pathogens. Catalyzes the conversion of (2E)-geranyl diphosphate (GPP) to (+)-alpha-pinene. The sequence is that of (+)-alpha pinene synthase 1, chloroplastic from Pinus contorta (Shore pine).